Consider the following 194-residue polypeptide: ATP-dependent Clp protease proteolytic subunit (194 aa).

The Nucleophile role is filled by Ser-97. His-122 is a catalytic residue.

The protein belongs to the peptidase S14 family. As to quaternary structure, fourteen ClpP subunits assemble into 2 heptameric rings which stack back to back to give a disk-like structure with a central cavity, resembling the structure of eukaryotic proteasomes.

The protein localises to the cytoplasm. It catalyses the reaction Hydrolysis of proteins to small peptides in the presence of ATP and magnesium. alpha-casein is the usual test substrate. In the absence of ATP, only oligopeptides shorter than five residues are hydrolyzed (such as succinyl-Leu-Tyr-|-NHMec, and Leu-Tyr-Leu-|-Tyr-Trp, in which cleavage of the -Tyr-|-Leu- and -Tyr-|-Trp bonds also occurs).. Cleaves peptides in various proteins in a process that requires ATP hydrolysis. Has a chymotrypsin-like activity. Plays a major role in the degradation of misfolded proteins. The polypeptide is ATP-dependent Clp protease proteolytic subunit (Carsonella ruddii (strain PV)).